Here is a 296-residue protein sequence, read N- to C-terminus: uncharacterized protein (296 aa).

2 consecutive CBS domains span residues G176–V232 and M236–E292.

This is an uncharacterized protein from Methanocaldococcus jannaschii (strain ATCC 43067 / DSM 2661 / JAL-1 / JCM 10045 / NBRC 100440) (Methanococcus jannaschii).